The chain runs to 340 residues: Dihydroorotate dehydrogenase (quinone) (340 aa).

FMN-binding positions include Ala-65–Lys-69 and Thr-89. Residue Lys-69 participates in substrate binding. Asn-114–Phe-118 provides a ligand contact to substrate. Asn-142 and Asn-175 together coordinate FMN. Asn-175 contacts substrate. Ser-178 serves as the catalytic Nucleophile. Substrate is bound at residue Asn-180. FMN contacts are provided by Lys-220 and Thr-248. Asn-249 to Thr-250 is a substrate binding site. Residues Gly-271, Gly-300, and Tyr-321 to Thr-322 each bind FMN.

This sequence belongs to the dihydroorotate dehydrogenase family. Type 2 subfamily. Monomer. The cofactor is FMN.

The protein localises to the cell membrane. It catalyses the reaction (S)-dihydroorotate + a quinone = orotate + a quinol. It participates in pyrimidine metabolism; UMP biosynthesis via de novo pathway; orotate from (S)-dihydroorotate (quinone route): step 1/1. In terms of biological role, catalyzes the conversion of dihydroorotate to orotate with quinone as electron acceptor. This is Dihydroorotate dehydrogenase (quinone) from Paraburkholderia xenovorans (strain LB400).